The chain runs to 486 residues: ATP synthase subunit beta (486 aa).

G167–T174 is a binding site for ATP.

This sequence belongs to the ATPase alpha/beta chains family. As to quaternary structure, F-type ATPases have 2 components, CF(1) - the catalytic core - and CF(0) - the membrane proton channel. CF(1) has five subunits: alpha(3), beta(3), gamma(1), delta(1), epsilon(1). CF(0) has three main subunits: a(1), b(2) and c(9-12). The alpha and beta chains form an alternating ring which encloses part of the gamma chain. CF(1) is attached to CF(0) by a central stalk formed by the gamma and epsilon chains, while a peripheral stalk is formed by the delta and b chains.

The protein localises to the cell inner membrane. The enzyme catalyses ATP + H2O + 4 H(+)(in) = ADP + phosphate + 5 H(+)(out). In terms of biological role, produces ATP from ADP in the presence of a proton gradient across the membrane. The catalytic sites are hosted primarily by the beta subunits. The polypeptide is ATP synthase subunit beta (Anaplasma marginale (strain St. Maries)).